The chain runs to 123 residues: Defensin beta 118 (123 aa).

An N-terminal signal peptide occupies residues 1–19; it reads MKLLLLALPILVLLPQVIP. Cystine bridges form between C27–C54, C34–C48, and C38–C55. The propeptide occupies 65 to 123; the sequence is LPTTSPTPLSDSTPGIIDNILTIRFTTDYFEISSKKDMVEESEAGQGTQTSPPNVHHTS. The segment at 100 to 123 is disordered; that stretch reads KDMVEESEAGQGTQTSPPNVHHTS. Polar residues predominate over residues 109–123; it reads GQGTQTSPPNVHHTS.

This sequence belongs to the beta-defensin family. Post-translationally, the three-dimensional structure formed by the three intramolecular disulfide bridges is indispensable for antimicrobial activity. In terms of tissue distribution, high-level and epididymis-specific expression. Most abundant in the epithelium of the caput and is also present in the lumen and bound to sperm.

The protein resides in the secreted. Host defense peptide that exhibits antimicrobial activity against both Gram-negative bacteria, such as E.coli and S.typhimurium, and Gram-positive bacteria, such as S.aureus and B.subtilis. Inhibits cell adhesion of E.coli on intestinal epithelial enterocytes. Causes rapid permeabilization of both the outer and inner membrane of E.coli, leading to morphological alterations on the bacterial surface. Binds to bacterial lipopolysaccharides (LPS) with high affinity, and may thereby be involved in immunoregulation through LPS neutralization. May contribute to epididymal innate immunity and protect the sperm against attack by microorganisms. In Macaca mulatta (Rhesus macaque), this protein is Defensin beta 118 (DEFB118).